Consider the following 689-residue polypeptide: Glycine--tRNA ligase beta subunit (689 aa).

This sequence belongs to the class-II aminoacyl-tRNA synthetase family. As to quaternary structure, tetramer of two alpha and two beta subunits.

Its subcellular location is the cytoplasm. It catalyses the reaction tRNA(Gly) + glycine + ATP = glycyl-tRNA(Gly) + AMP + diphosphate. This Hamiltonella defensa subsp. Acyrthosiphon pisum (strain 5AT) protein is Glycine--tRNA ligase beta subunit.